The primary structure comprises 116 residues: uncharacterized protein (116 aa).

Disordered regions lie at residues 1–26 (MLLT…KSSN) and 74–116 (ENDL…KSSI). Positions 14–26 (SANSTDDSSKSSN) are enriched in low complexity. The span at 74–86 (ENDLKRSKSQGRE) shows a compositional bias: basic and acidic residues. The segment covering 104–116 (NTASEIQRTKSSI) has biased composition (polar residues).

This is an uncharacterized protein from Saccharomyces cerevisiae (strain ATCC 204508 / S288c) (Baker's yeast).